The primary structure comprises 248 residues: Probable transcriptional regulatory protein trd_1132 (248 aa).

It belongs to the TACO1 family.

Its subcellular location is the cytoplasm. This Thermomicrobium roseum (strain ATCC 27502 / DSM 5159 / P-2) protein is Probable transcriptional regulatory protein trd_1132.